The chain runs to 342 residues: Serpentine receptor class beta-16 (342 aa).

The Extracellular segment spans residues 1–22 (MDRELIEICKENSATAFSVGYQ). Residues 23-43 (IVYLIYVVLSVTSIFTCSYFI) traverse the membrane as a helical segment. The Cytoplasmic segment spans residues 44–61 (KTFIWNSTFHPNFKLLLT). A helical membrane pass occupies residues 62 to 82 (MYFFAAIFHSFLFTASYLMMI). The Extracellular portion of the chain corresponds to 83 to 102 (ERFLDYQTDCDIHVSMVPYA). The chain crosses the membrane as a helical span at residues 103-123 (IVHSSIACCLFCGMLTQVFMV). Over 124–141 (IERLLATIKIESYEHNTS) the chain is Cytoplasmic. Residues 142–162 (FWHILAYLFFCIVLPLSLLVW) traverse the membrane as a helical segment. The Extracellular segment spans residues 163 to 187 (AYQDADYNSPVITAISPPKGVEIRL). A helical transmembrane segment spans residues 188–208 (NILYIFCFFLAILALILLQVV). Over 209–237 (RFVNKRRESRIEISLSGRFQIVENIDTTT) the chain is Cytoplasmic. A helical membrane pass occupies residues 238 to 258 (FISSILIINMIMSVIYIVGTF). Topologically, residues 259–274 (TLRNFQFDAFINNQPA) are extracellular. The helical transmembrane segment at 275–295 (LATVKTIFYLHPLFSFLMPLI) threads the bilayer. Over 296 to 342 (SSYHLSKMRERRVKRREHLMAIKTKGREGSDAYNQLLHDQWTQHFLK) the chain is Cytoplasmic.

The protein belongs to the nematode receptor-like protein srb family. In terms of tissue distribution, expressed throughout the nervous system, in pharyngeal muscle, hermaphrodite vulval muscles and in the male tail. Not expressed in male somatic gonads or sperm.

It is found in the cell membrane. The protein resides in the perikaryon. The protein localises to the cell projection. Its subcellular location is the dendrite. Functionally, G-protein coupled receptor. Plays a role in the navigational capacity of sperm and promotes the targeting of sperm derived from males to the fertilization site in the uterus of hermaphrodites. The chain is Serpentine receptor class beta-16 from Caenorhabditis elegans.